The chain runs to 289 residues: Homoserine kinase (289 aa).

79–89 (PLARGLGSSSS) contributes to the ATP binding site.

The protein belongs to the GHMP kinase family. Homoserine kinase subfamily.

The protein resides in the cytoplasm. The enzyme catalyses L-homoserine + ATP = O-phospho-L-homoserine + ADP + H(+). Its pathway is amino-acid biosynthesis; L-threonine biosynthesis; L-threonine from L-aspartate: step 4/5. Functionally, catalyzes the ATP-dependent phosphorylation of L-homoserine to L-homoserine phosphate. The chain is Homoserine kinase from Streptococcus pneumoniae (strain Taiwan19F-14).